A 301-amino-acid polypeptide reads, in one-letter code: Leucine-rich repeat-containing protein 30 (301 aa).

LRR repeat units lie at residues 72–93 (EVQK…VGKL), 95–116 (RIVV…VSLL), 118–139 (CLKV…LSLC), 141–163 (KLEV…ADLS), 164–185 (RLRK…VFSL), 187–208 (ELIF…IQHL), 210–231 (SLQI…LCLV), 233–254 (SLEL…LHLL), and 265–287 (MDKG…VEGG).

The sequence is that of Leucine-rich repeat-containing protein 30 (LRRC30) from Homo sapiens (Human).